The sequence spans 347 residues: UDP-N-acetylenolpyruvoylglucosamine reductase (347 aa).

Positions 24–195 constitute an FAD-binding PCMH-type domain; it reads FDARARVAAR…VAVTFRLPKA (172 aa). R171 is a catalytic residue. S247 functions as the Proton donor in the catalytic mechanism. E343 is a catalytic residue.

This sequence belongs to the MurB family. FAD serves as cofactor.

It is found in the cytoplasm. It catalyses the reaction UDP-N-acetyl-alpha-D-muramate + NADP(+) = UDP-N-acetyl-3-O-(1-carboxyvinyl)-alpha-D-glucosamine + NADPH + H(+). It functions in the pathway cell wall biogenesis; peptidoglycan biosynthesis. Functionally, cell wall formation. This Burkholderia pseudomallei (strain 668) protein is UDP-N-acetylenolpyruvoylglucosamine reductase.